The chain runs to 120 residues: Large ribosomal subunit protein bL19 (120 aa).

It belongs to the bacterial ribosomal protein bL19 family.

This protein is located at the 30S-50S ribosomal subunit interface and may play a role in the structure and function of the aminoacyl-tRNA binding site. The sequence is that of Large ribosomal subunit protein bL19 from Chlorobium luteolum (strain DSM 273 / BCRC 81028 / 2530) (Pelodictyon luteolum).